A 192-amino-acid polypeptide reads, in one-letter code: Glycerol-3-phosphate acyltransferase (192 aa).

5 helical membrane passes run 1–21, 49–69, 80–100, 110–130, and 143–163; these read MFIA…AYIL, GLAG…IYSL, ELCI…WLKF, IGVI…SWLF, and IVSI…VVAL.

It belongs to the PlsY family. As to quaternary structure, probably interacts with PlsX.

It localises to the cell inner membrane. The catalysed reaction is an acyl phosphate + sn-glycerol 3-phosphate = a 1-acyl-sn-glycero-3-phosphate + phosphate. Its pathway is lipid metabolism; phospholipid metabolism. Functionally, catalyzes the transfer of an acyl group from acyl-phosphate (acyl-PO(4)) to glycerol-3-phosphate (G3P) to form lysophosphatidic acid (LPA). This enzyme utilizes acyl-phosphate as fatty acyl donor, but not acyl-CoA or acyl-ACP. This Anaplasma phagocytophilum (strain HZ) protein is Glycerol-3-phosphate acyltransferase.